The sequence spans 185 residues: Peptidyl-tRNA hydrolase (185 aa).

Tyr14 is a binding site for tRNA. His19 acts as the Proton acceptor in catalysis. TRNA contacts are provided by Tyr65, Asn67, and Asn113.

This sequence belongs to the PTH family. Monomer.

It is found in the cytoplasm. The enzyme catalyses an N-acyl-L-alpha-aminoacyl-tRNA + H2O = an N-acyl-L-amino acid + a tRNA + H(+). In terms of biological role, hydrolyzes ribosome-free peptidyl-tRNAs (with 1 or more amino acids incorporated), which drop off the ribosome during protein synthesis, or as a result of ribosome stalling. Catalyzes the release of premature peptidyl moieties from peptidyl-tRNA molecules trapped in stalled 50S ribosomal subunits, and thus maintains levels of free tRNAs and 50S ribosomes. The sequence is that of Peptidyl-tRNA hydrolase from Rickettsia africae (strain ESF-5).